Here is a 74-residue protein sequence, read N- to C-terminus: Large ribosomal subunit protein bL31 (74 aa).

Zn(2+) contacts are provided by Cys-16, Cys-18, Cys-38, and Cys-41.

Belongs to the bacterial ribosomal protein bL31 family. Type A subfamily. In terms of assembly, part of the 50S ribosomal subunit. The cofactor is Zn(2+).

Binds the 23S rRNA. This chain is Large ribosomal subunit protein bL31, found in Mycobacteroides abscessus (strain ATCC 19977 / DSM 44196 / CCUG 20993 / CIP 104536 / JCM 13569 / NCTC 13031 / TMC 1543 / L948) (Mycobacterium abscessus).